The sequence spans 193 residues: Inosine triphosphate pyrophosphatase (193 aa).

An ITP-binding site is contributed by 10–15 (TGNANK). Glutamate 42 is a binding site for Mg(2+). ITP is bound by residues lysine 54, 70–71 (DT), lysine 87, 146–149 (FGWD), lysine 169, and 174–175 (HR).

The protein belongs to the HAM1 NTPase family. In terms of assembly, homodimer. The cofactor is Mg(2+). Mn(2+) is required as a cofactor.

The protein localises to the cytoplasm. It is found in the nucleus. It catalyses the reaction ITP + H2O = IMP + diphosphate + H(+). The catalysed reaction is dITP + H2O = dIMP + diphosphate + H(+). It carries out the reaction XTP + H2O = XMP + diphosphate + H(+). Pyrophosphatase that hydrolyzes non-canonical purine nucleotides such as inosine triphosphate (ITP), deoxyinosine triphosphate (dITP) or xanthosine 5'-triphosphate (XTP) to their respective monophosphate derivatives. The enzyme does not distinguish between the deoxy- and ribose forms. Probably excludes non-canonical purines from RNA and DNA precursor pools, thus preventing their incorporation into RNA and DNA and avoiding chromosomal lesions. This Mycosarcoma maydis (Corn smut fungus) protein is Inosine triphosphate pyrophosphatase.